We begin with the raw amino-acid sequence, 231 residues long: Urease subunit gamma/beta (231 aa).

Residues 1-101 are urease gamma; sequence MLLTPTELER…LVTVHQPIRP (101 aa). A urease beta region spans residues 102 to 231; the sequence is GQLPLAVMPT…RARAQFFKGA (130 aa).

The protein in the N-terminal section; belongs to the urease gamma subunit family. It in the C-terminal section; belongs to the urease beta subunit family. As to quaternary structure, heterohexamer of 3 UreC (alpha) and 3 UreAB (gamma/beta) subunits.

The protein localises to the cytoplasm. The enzyme catalyses urea + 2 H2O + H(+) = hydrogencarbonate + 2 NH4(+). It participates in nitrogen metabolism; urea degradation; CO(2) and NH(3) from urea (urease route): step 1/1. This is Urease subunit gamma/beta from Pseudomonas syringae pv. syringae (strain B728a).